Here is a 158-residue protein sequence, read N- to C-terminus: SsrA-binding protein (158 aa).

The protein belongs to the SmpB family.

It is found in the cytoplasm. In terms of biological role, required for rescue of stalled ribosomes mediated by trans-translation. Binds to transfer-messenger RNA (tmRNA), required for stable association of tmRNA with ribosomes. tmRNA and SmpB together mimic tRNA shape, replacing the anticodon stem-loop with SmpB. tmRNA is encoded by the ssrA gene; the 2 termini fold to resemble tRNA(Ala) and it encodes a 'tag peptide', a short internal open reading frame. During trans-translation Ala-aminoacylated tmRNA acts like a tRNA, entering the A-site of stalled ribosomes, displacing the stalled mRNA. The ribosome then switches to translate the ORF on the tmRNA; the nascent peptide is terminated with the 'tag peptide' encoded by the tmRNA and targeted for degradation. The ribosome is freed to recommence translation, which seems to be the essential function of trans-translation. The protein is SsrA-binding protein of Caldicellulosiruptor bescii (strain ATCC BAA-1888 / DSM 6725 / KCTC 15123 / Z-1320) (Anaerocellum thermophilum).